Consider the following 761-residue polypeptide: Xaa-Pro dipeptidyl-peptidase (761 aa).

Catalysis depends on charge relay system residues serine 347, aspartate 467, and histidine 497.

This sequence belongs to the peptidase S15 family. In terms of assembly, homodimer.

The protein resides in the cytoplasm. The enzyme catalyses Hydrolyzes Xaa-Pro-|- bonds to release unblocked, N-terminal dipeptides from substrates including Ala-Pro-|-p-nitroanilide and (sequentially) Tyr-Pro-|-Phe-Pro-|-Gly-Pro-|-Ile.. In terms of biological role, removes N-terminal dipeptides sequentially from polypeptides having unsubstituted N-termini provided that the penultimate residue is proline. This Streptococcus agalactiae serotype Ia (strain ATCC 27591 / A909 / CDC SS700) protein is Xaa-Pro dipeptidyl-peptidase.